Reading from the N-terminus, the 608-residue chain is RAS guanyl-releasing protein 2 (608 aa).

The N-terminal Ras-GEF domain occupies 4-126; sequence TLDLDKGCTV…SLIDIESVPT (123 aa). Phosphoserine occurs at positions 116, 117, and 147. Residues 154–387 enclose the Ras-GEF domain; the sequence is EPMELAEHLT…YQLSLQREPR (234 aa). Residues 382-405 are disordered; it reads LQREPRSKSSPTSPTSCTPPPRPP. EF-hand domains lie at 426 to 461 and 463 to 490; these read HIEK…FPYL and AFGD…SSSV. 10 residues coordinate Ca(2+): Asp-439, Asp-441, Asp-443, His-445, Glu-450, Asp-468, Asn-470, Asp-472, Cys-474, and Glu-479. The Phorbol-ester/DAG-type zinc finger occupies 498-548; sequence VHNLQESNSLRPVACRHCKALILGIYKQGLKCRACGVNCHKQCKDRLSVEC. Phosphoserine occurs at positions 554 and 575. The segment at 555–596 is disordered; the sequence is VSLEGSAPSPSPTHTHHRAFSFSLPRPGRRSSRPPEIREEEV.

Belongs to the RASGRP family. As to quaternary structure, forms a signaling complex with RAP1 and BRAF. Interacts with F-actin. Interacts with RAP1. Expressed in striatal neurons (at protein level). Expressed in the hematopoietic system. Detected in olfactory structures and deep cortical layers of brain.

Its subcellular location is the cytoplasm. The protein localises to the cytosol. It localises to the cell membrane. The protein resides in the synapse. It is found in the synaptosome. Its subcellular location is the cell projection. The protein localises to the ruffle membrane. Its function is as follows. Functions as a calcium- and DAG-regulated nucleotide exchange factor specifically activating Rap through the exchange of bound GDP for GTP. May also activate other GTPases such as RRAS, RRAS2, NRAS, KRAS but not HRAS. Functions in aggregation of platelets and adhesion of T-lymphocytes and neutrophils probably through inside-out integrin activation. May function in the muscarinic acetylcholine receptor M1/CHRM1 signaling pathway. This chain is RAS guanyl-releasing protein 2 (Rasgrp2), found in Rattus norvegicus (Rat).